Reading from the N-terminus, the 158-residue chain is Endoribonuclease YbeY (158 aa).

3 residues coordinate Zn(2+): histidine 122, histidine 126, and histidine 132.

The protein belongs to the endoribonuclease YbeY family. Requires Zn(2+) as cofactor.

The protein resides in the cytoplasm. In terms of biological role, single strand-specific metallo-endoribonuclease involved in late-stage 70S ribosome quality control and in maturation of the 3' terminus of the 16S rRNA. In Bacillus licheniformis (strain ATCC 14580 / DSM 13 / JCM 2505 / CCUG 7422 / NBRC 12200 / NCIMB 9375 / NCTC 10341 / NRRL NRS-1264 / Gibson 46), this protein is Endoribonuclease YbeY.